A 261-amino-acid chain; its full sequence is tRNA U34 carboxymethyltransferase (261 aa).

Carboxy-S-adenosyl-L-methionine-binding positions include lysine 25, tryptophan 39, lysine 44, glycine 63, 114 to 115 (VE), tyrosine 135, and arginine 250.

It belongs to the class I-like SAM-binding methyltransferase superfamily. CmoB family. Homotetramer.

It carries out the reaction carboxy-S-adenosyl-L-methionine + 5-hydroxyuridine(34) in tRNA = 5-carboxymethoxyuridine(34) in tRNA + S-adenosyl-L-homocysteine + H(+). In terms of biological role, catalyzes carboxymethyl transfer from carboxy-S-adenosyl-L-methionine (Cx-SAM) to 5-hydroxyuridine (ho5U) to form 5-carboxymethoxyuridine (cmo5U) at position 34 in tRNAs. The protein is tRNA U34 carboxymethyltransferase of Helicobacter pylori (strain Shi470).